Reading from the N-terminus, the 493-residue chain is MSDSKDSKGKAPQKPNDAEQTPGGKLTPQAAEALLENNPSLKNELGGLDKDKALEALRKMDISELLTGLSLTGKNKKDMAAFKFWQTQPVPRFDEAASNAAGGPIKMIDPEKVSKEPDALIEGFEWTTLDLTNEEELRELWDLLTYHYVEDDNAMFRFRYSKSFLHWALMSPGWRKEWHVGVRATKSRKLVASISGVPTQIRVRGQKIKVTEINFLCIHKKLRSKRLAPVLIKEITRRCYLNGIYQAIYTAGVVLPTPVSSCRYYHRPLDWLKLYEVGFSPLPRGSTKARQITKNHLPSHTSTPNLRPMEAKDVDAVHDLLERYLNQFDIHQAFTREEIDHWLVYKESPQKEQVIWSYVVEDPETHKITDFFSFYNLESTVIQHPKHDCVRAAYLYYYATETAFLDDQKALKNRLQMLMNDALILAKKAQFDVFNALTSHHNPLFLEQLKFGAGDGQLHFYLYNYRTAPIAGGVNEKNLPDENRMGGVGVVML.

Residues 1–30 (MSDSKDSKGKAPQKPNDAEQTPGGKLTPQA) are disordered. Residues 82–85 (FKFW), 216–218 (LCI), and 224–228 (SKRLA) each bind tetradecanoyl-CoA. Residue Leu-493 is the Proton acceptor; via carboxylate of the active site.

Belongs to the NMT family. As to quaternary structure, monomer.

It localises to the cytoplasm. It catalyses the reaction N-terminal glycyl-[protein] + tetradecanoyl-CoA = N-tetradecanoylglycyl-[protein] + CoA + H(+). In terms of biological role, adds a myristoyl group to the N-terminal glycine residue of certain cellular proteins. In Emericella nidulans (strain FGSC A4 / ATCC 38163 / CBS 112.46 / NRRL 194 / M139) (Aspergillus nidulans), this protein is Glycylpeptide N-tetradecanoyltransferase (swoF).